We begin with the raw amino-acid sequence, 132 residues long: Small ribosomal subunit protein uS11 (132 aa).

A disordered region spans residues 1–21; that stretch reads MAAPKSAVRKPRRKDKKNIAV. Over residues 7–16 the composition is skewed to basic residues; that stretch reads AVRKPRRKDK.

Belongs to the universal ribosomal protein uS11 family. In terms of assembly, part of the 30S ribosomal subunit. Interacts with proteins S7 and S18. Binds to IF-3.

Its function is as follows. Located on the platform of the 30S subunit, it bridges several disparate RNA helices of the 16S rRNA. Forms part of the Shine-Dalgarno cleft in the 70S ribosome. This chain is Small ribosomal subunit protein uS11, found in Clavibacter sepedonicus (Clavibacter michiganensis subsp. sepedonicus).